The following is a 97-amino-acid chain: Mapk-regulated corepressor-interacting protein 1 (97 aa).

The span at 1 to 26 (MTSSSTPRMHTYKRTSSPRSPTNTGE) shows a compositional bias: polar residues. Disordered stretches follow at residues 1-27 (MTSS…TGEL) and 54-97 (QNHE…SKKS). Composition is skewed to basic and acidic residues over residues 54-68 (QNHE…EYVE) and 84-97 (SDLK…SKKS). The PXDLS motif motif lies at 80–84 (PVDLS).

This sequence belongs to the MCRIP family.

Its subcellular location is the nucleus. It is found in the cytoplasm. It localises to the stress granule. Its function is as follows. May play a role in the regulation of the epithelial-mesenchymal transition. The sequence is that of Mapk-regulated corepressor-interacting protein 1 (mcrip1) from Danio rerio (Zebrafish).